The primary structure comprises 245 residues: Probable phosphatase YcdX (245 aa).

Zn(2+) is bound by residues His-7, His-9, His-15, His-40, Glu-73, His-101, His-131, Asp-192, and His-194.

Belongs to the PHP family. In terms of assembly, homotrimer. Requires Zn(2+) as cofactor.

The polypeptide is Probable phosphatase YcdX (Escherichia fergusonii (strain ATCC 35469 / DSM 13698 / CCUG 18766 / IAM 14443 / JCM 21226 / LMG 7866 / NBRC 102419 / NCTC 12128 / CDC 0568-73)).